A 154-amino-acid polypeptide reads, in one-letter code: Transcription antitermination protein NusB (154 aa).

This sequence belongs to the NusB family.

Its function is as follows. Involved in transcription antitermination. Required for transcription of ribosomal RNA (rRNA) genes. Binds specifically to the boxA antiterminator sequence of the ribosomal RNA (rrn) operons. The chain is Transcription antitermination protein NusB from Desulfosudis oleivorans (strain DSM 6200 / JCM 39069 / Hxd3) (Desulfococcus oleovorans).